We begin with the raw amino-acid sequence, 1121 residues long: Transcription factor CSR2 (1121 aa).

Residues Ser-23, Ser-46, and Ser-127 each carry the phosphoserine modification. Disordered stretches follow at residues 273-342 (PLHT…RSLP), 513-532 (HTQL…PQKL), 579-600 (LKRN…GLAM), and 837-860 (IPQD…LQTS). A compositionally biased stretch (polar residues) spans 276 to 310 (TQRTSPSNTARTGNAMDTSNSDRASPASNNNTTDA). 3 stretches are compositionally biased toward low complexity: residues 318 to 329 (NNNPMNNNNSPA), 519 to 529 (SRPRSSSISSP), and 582 to 597 (NNSN…SSSG). The residue at position 327 (Ser-327) is a Phosphoserine. Positions 837-846 (IPQDKNHNEV) are enriched in basic and acidic residues. A Glycyl lysine isopeptide (Lys-Gly) (interchain with G-Cter in ubiquitin) cross-link involves residue Lys-841. Over residues 847 to 860 (NDTNGNSNTSLQTS) the composition is skewed to polar residues. Ser-987 bears the Phosphoserine mark. Positions 999–1009 (KTTAVSDSSNG) are enriched in polar residues. Disordered stretches follow at residues 999–1022 (KTTA…QARP) and 1075–1121 (TPRY…EISS). Positions 1084–1093 (TNTDYNYNDN) are enriched in low complexity.

It belongs to the CSR2 family. In terms of processing, phosphorylated by CDC28.

It is found in the cytoplasm. It localises to the nucleus. Functionally, transcription factor involved in the regulation of fermentation and aerobic oxidation. Acts as a repressor of CYC1, which is involved in electron flow through the mitochondria under aerobic condition. Required for pseudohyphal formation upon nitrogen starvation. May be involved in viability at stationary phase and aging. The sequence is that of Transcription factor CSR2 (CSR2) from Saccharomyces cerevisiae (strain ATCC 204508 / S288c) (Baker's yeast).